Reading from the N-terminus, the 155-residue chain is Probable Brix domain-containing ribosomal biogenesis protein (155 aa).

Residues 1-155 (MLLTTSRKPS…LLIRDFRVGE (155 aa)) form the Brix domain.

Probably involved in the biogenesis of the ribosome. This chain is Probable Brix domain-containing ribosomal biogenesis protein, found in Methanothermobacter thermautotrophicus (strain ATCC 29096 / DSM 1053 / JCM 10044 / NBRC 100330 / Delta H) (Methanobacterium thermoautotrophicum).